The primary structure comprises 310 residues: Acetylglutamate kinase (310 aa).

Substrate is bound by residues 70–71 (GG), Arg92, and Asn191.

It belongs to the acetylglutamate kinase family. ArgB subfamily.

Its subcellular location is the cytoplasm. It carries out the reaction N-acetyl-L-glutamate + ATP = N-acetyl-L-glutamyl 5-phosphate + ADP. The protein operates within amino-acid biosynthesis; L-arginine biosynthesis; N(2)-acetyl-L-ornithine from L-glutamate: step 2/4. Catalyzes the ATP-dependent phosphorylation of N-acetyl-L-glutamate. The protein is Acetylglutamate kinase of Corynebacterium diphtheriae (strain ATCC 700971 / NCTC 13129 / Biotype gravis).